Consider the following 176-residue polypeptide: ATP synthase subunit b 2 (176 aa).

A helical membrane pass occupies residues 29 to 49; the sequence is IFWLVITLVIIYMVLSKVALP.

The protein belongs to the ATPase B chain family. F-type ATPases have 2 components, F(1) - the catalytic core - and F(0) - the membrane proton channel. F(1) has five subunits: alpha(3), beta(3), gamma(1), delta(1), epsilon(1). F(0) has three main subunits: a(1), b(2) and c(10-14). The alpha and beta chains form an alternating ring which encloses part of the gamma chain. F(1) is attached to F(0) by a central stalk formed by the gamma and epsilon chains, while a peripheral stalk is formed by the delta and b chains.

The protein localises to the cell inner membrane. In terms of biological role, f(1)F(0) ATP synthase produces ATP from ADP in the presence of a proton or sodium gradient. F-type ATPases consist of two structural domains, F(1) containing the extramembraneous catalytic core and F(0) containing the membrane proton channel, linked together by a central stalk and a peripheral stalk. During catalysis, ATP synthesis in the catalytic domain of F(1) is coupled via a rotary mechanism of the central stalk subunits to proton translocation. Functionally, component of the F(0) channel, it forms part of the peripheral stalk, linking F(1) to F(0). The b'-subunit is a diverged and duplicated form of b found in plants and photosynthetic bacteria. The sequence is that of ATP synthase subunit b 2 (atpF2) from Roseobacter denitrificans (strain ATCC 33942 / OCh 114) (Erythrobacter sp. (strain OCh 114)).